A 160-amino-acid chain; its full sequence is Major pollen allergen Bet v 1-B (160 aa).

Residues Lys55, Tyr82, Tyr84, and Asn101 each coordinate brassinolide.

The protein belongs to the BetVI family.

The protein localises to the cytoplasm. May be a general steroid carrier protein. This is Major pollen allergen Bet v 1-B (BETV1B) from Betula pendula (European white birch).